Consider the following 698-residue polypeptide: MAPPGVGVGVAYLWGKGRGGRKGTPVVVTMESPNYSVVEVDGPDAEAELRTAAVAMDKGGGRGRSRSRTARQLTWVLLLRARRAAGRLASFAAAAARRFRRSPADAADELGRGRGRLMYGFIRGFLALSLLALAVELAAYWNGWRLRRPELHVPEAVEIEGWAHSAYISWMSFRADYIRRPIEFLSKACILLFVIQSMDRLVLCLGCFWIKLRKIKPRIEGDPFREGSGYQHPMVLVQIPMCNEKEVYEQSISAACQLDWPREKFLIQVLDDSSDESIQLLIKAEVSKWSHQGVNIVYRHRVLRTGYKAGNLKSAMSCDYVKDYEFVAIFDADFQPTPDFLKKTIPHFEGNPELGLVQARWSFVNKDENLLTRLQNINLCFHFEVEQQVNGVFLNFFGFNGTAGVWRIQALEESGGWLERTTVEDMDIAVRAHLNGWKFIFLNDVKVLCELPESYEAYRKQQHRWHSGPMHLFWLCLPDILTAKISSWKKANLILLFFLLRKLILPFYSFTLFCVILPLTMFVPEAELPVWVICYVPVCMSFLNILPSPRSFPFIVPYLLFENTMSVTKFNAMVSGLFKLGSSYEWIVTKKSGRSSESDLSTAVERDTKDLTLPRLQKQISESELIDLKMQKERQEKAPLGAKKANKIYKKELALSLLLLTAATRSLLSAQGIHFYFLLFQGVSFLFVGLDLIGEQID.

Helical transmembrane passes span 124–144 and 190–210; these read GFLA…WNGW and ILLF…CFWI. Residue aspartate 272 is part of the active site. 2 residues coordinate substrate: aspartate 331 and aspartate 333. Aspartate 425 is a catalytic residue. 4 helical membrane-spanning segments follow: residues 503–523, 528–548, 653–668, and 673–693; these read LILP…TMFV, LPVW…ILPS, LALS…RSLL, and IHFY…LDLI.

Belongs to the glycosyltransferase 2 family. Plant cellulose synthase-like C subfamily.

The protein localises to the golgi apparatus membrane. Its function is as follows. Probable beta-1,4-glucan synthase rather involved in the synthesis of the xyloglucan backbone than cellulose. Seems to work simultaneously with xyloglucan 6-xylosyltransferase. Xyloglucan is a noncellulosic polysaccharides of plant cell wall and consists of a glucan backbone substituted by xylose, galactose and fucose. The chain is Probable xyloglucan glycosyltransferase 2 (CSLC2) from Oryza sativa subsp. indica (Rice).